A 297-amino-acid chain; its full sequence is Bifunctional protein FolD (297 aa).

NADP(+)-binding positions include 167-169, Ser-192, and Ile-233; that span reads GRS.

It belongs to the tetrahydrofolate dehydrogenase/cyclohydrolase family. As to quaternary structure, homodimer.

The catalysed reaction is (6R)-5,10-methylene-5,6,7,8-tetrahydrofolate + NADP(+) = (6R)-5,10-methenyltetrahydrofolate + NADPH. It carries out the reaction (6R)-5,10-methenyltetrahydrofolate + H2O = (6R)-10-formyltetrahydrofolate + H(+). It participates in one-carbon metabolism; tetrahydrofolate interconversion. Its function is as follows. Catalyzes the oxidation of 5,10-methylenetetrahydrofolate to 5,10-methenyltetrahydrofolate and then the hydrolysis of 5,10-methenyltetrahydrofolate to 10-formyltetrahydrofolate. This chain is Bifunctional protein FolD, found in Caulobacter vibrioides (strain ATCC 19089 / CIP 103742 / CB 15) (Caulobacter crescentus).